A 236-amino-acid chain; its full sequence is Putative lipoprotein MlpA (236 aa).

A signal peptide spans 1–21; the sequence is MTKNIVNTALVLVGAGSLLTG. The N-palmitoyl cysteine moiety is linked to residue Cys22. Residue Cys22 is the site of S-diacylglycerol cysteine attachment.

It is found in the cell membrane. This chain is Putative lipoprotein MlpA (mlpA), found in Myxococcus xanthus.